Consider the following 119-residue polypeptide: Urotensin-2B (119 aa).

The first 28 residues, 1 to 28 (MNKILSSTVCFGLLTLLSVLSFLQSVHG), serve as a signal peptide directing secretion. Positions 29–109 (RPYLTQGNEI…VDGLFSSHPS (81 aa)) are excised as a propeptide. The cysteines at positions 113 and 118 are disulfide-linked.

The protein belongs to the urotensin-2 family.

The protein localises to the secreted. Potent vasoconstrictor. The polypeptide is Urotensin-2B (UTS2B) (Homo sapiens (Human)).